A 145-amino-acid chain; its full sequence is Small ribosomal subunit protein eS19 (145 aa).

The protein belongs to the eukaryotic ribosomal protein eS19 family. As to quaternary structure, component of the small ribosomal subunit.

It is found in the cytoplasm. The protein resides in the nucleus. Its function is as follows. Component of the small ribosomal subunit. The ribosome is a large ribonucleoprotein complex responsible for the synthesis of proteins in the cell. Required for pre-rRNA processing and maturation of 40S ribosomal subunits. This Myxine glutinosa (Atlantic hagfish) protein is Small ribosomal subunit protein eS19 (rps19).